The sequence spans 274 residues: MGIKIYKPTSPGRRHQTCSSFEEITTSTPEKSLLIKLKKSGGRNALGRVTSRHQGGGHKQKYRIIDFRRDKISIPAKVASIEYDPYRSARIALLHYVDGEKRYILAPLDLKVGDTVLSGPEADIKPGNALPLKAIPLGTIIHNVELKLGKGAQLARSAGTFAQLMAKEGRYSQVKLPSGEVRMVLQDCYATIGQVGNVDHEKVSLGKAGRARWLGKRPKVRGVAMNPVDHPHGGGEGRTSGGRHPVTPWGIPTKGYKTRTNKSTDRFIVKKRTK.

Residues 223-258 form a disordered region; sequence VAMNPVDHPHGGGEGRTSGGRHPVTPWGIPTKGYKT.

Belongs to the universal ribosomal protein uL2 family. As to quaternary structure, part of the 50S ribosomal subunit. Forms a bridge to the 30S subunit in the 70S ribosome.

One of the primary rRNA binding proteins. Required for association of the 30S and 50S subunits to form the 70S ribosome, for tRNA binding and peptide bond formation. It has been suggested to have peptidyltransferase activity; this is somewhat controversial. Makes several contacts with the 16S rRNA in the 70S ribosome. In Pelobacter propionicus (strain DSM 2379 / NBRC 103807 / OttBd1), this protein is Large ribosomal subunit protein uL2.